A 500-amino-acid chain; its full sequence is MPVLIPPVEHSQDTRVGHPAWREATRALAEEAHQLTDRCGQEAVTMWQPNESVRDPHVAHHLCRAAYILPWRFRVEMLKGGSTMEKPPPGEGVTLWKSKMKPPAWHARLPLPMHRDARALQTAEVVQAHARGARLTAARLGRAQHQINGQLRLLQRQREATDRRLSEVRKALLINQQSVKLRGYRPKSETISDKADSMLTWEKEELKSMKRKMEADMEKSEALLKTLASCRDALVFCCKERLQAVELMNQPLDKVLEQAGRHSWVNISRVPTPRTQGLKTPPPDPVGTYTPECAKALYEAKRLLMESKDTLLDMAKNEEDIREQQQQISDRVCASLAQKMRETLELKDRLNMTLGLMRGTIHRCTKFNQEMYITRGLIKGPLSKSHLETREKLDRPLVRMYQRHVGTQLPEAARLAQGTDKLQRHISHVEKNLDELLSMRKKLTWSFNCKKIGHNVDYSVVRLRLRQRHPQVCYEQAQRLVNDWDPRTPPRVKSNTAITK.

Residues 198 to 229 (MLTWEKEELKSMKRKMEADMEKSEALLKTLAS) are a coiled coil. The residue at position 372 (Tyr-372) is a Phosphotyrosine. The stretch at 420 to 444 (DKLQRHISHVEKNLDELLSMRKKLT) forms a coiled coil.

As to quaternary structure, microtubule inner protein component of sperm flagellar doublet microtubules.

The protein resides in the cytoplasm. Its subcellular location is the cytoskeleton. It localises to the flagellum axoneme. Microtubule inner protein (MIP) part of the dynein-decorated doublet microtubules (DMTs) in sperm flagellar axoneme, which is required for motile flagellum beating. Forms an extensive interaction network cross-linking the lumen of axonemal doublet microtubules. In Bos taurus (Bovine), this protein is Tektin-like protein 1.